Here is a 223-residue protein sequence, read N- to C-terminus: Ribonuclease T (223 aa).

The 176-residue stretch at 20 to 195 (VVIDVETAGF…YDTERTAELF (176 aa)) folds into the Exonuclease domain. Mg(2+) is bound by residues Asp23, Glu25, His182, and Asp187. Catalysis depends on His182, which acts as the Proton donor/acceptor.

Belongs to the RNase T family. In terms of assembly, homodimer. Mg(2+) serves as cofactor.

Trims short 3' overhangs of a variety of RNA species, leaving a one or two nucleotide 3' overhang. Responsible for the end-turnover of tRNA: specifically removes the terminal AMP residue from uncharged tRNA (tRNA-C-C-A). Also appears to be involved in tRNA biosynthesis. In Photobacterium profundum (strain SS9), this protein is Ribonuclease T.